The chain runs to 275 residues: Large ribosomal subunit protein uL2 (275 aa).

The segment at 236–263 (EGRGKGQHPVTPWGMPTKGYKTRRGRRA) is disordered.

Belongs to the universal ribosomal protein uL2 family. In terms of assembly, part of the 50S ribosomal subunit. Forms a bridge to the 30S subunit in the 70S ribosome.

In terms of biological role, one of the primary rRNA binding proteins. Required for association of the 30S and 50S subunits to form the 70S ribosome, for tRNA binding and peptide bond formation. It has been suggested to have peptidyltransferase activity; this is somewhat controversial. Makes several contacts with the 16S rRNA in the 70S ribosome. In Pseudothermotoga lettingae (strain ATCC BAA-301 / DSM 14385 / NBRC 107922 / TMO) (Thermotoga lettingae), this protein is Large ribosomal subunit protein uL2.